The primary structure comprises 83 residues: Small ribosomal subunit protein uS17 (83 aa).

The protein belongs to the universal ribosomal protein uS17 family. As to quaternary structure, part of the 30S ribosomal subunit.

Functionally, one of the primary rRNA binding proteins, it binds specifically to the 5'-end of 16S ribosomal RNA. This is Small ribosomal subunit protein uS17 from Campylobacter curvus (strain 525.92).